We begin with the raw amino-acid sequence, 417 residues long: Snake venom metalloproteinase aculysin-1 (417 aa).

Residues 1 to 20 (MIQVLLVTICLAAFPYQGSS) form the signal peptide. Positions 21-189 (IMLESGKVND…KKPSWLNLTP (169 aa)) are excised as a propeptide. The Peptidase M12B domain occupies 197 to 392 (TSVNLQLIVD…KKPKCIHKKS (196 aa)). 3 disulfide bridges follow: cysteine 308-cysteine 387, cysteine 349-cysteine 371, and cysteine 351-cysteine 354. Histidine 333 is a Zn(2+) binding site. The active site involves glutamate 334. 2 residues coordinate Zn(2+): histidine 337 and histidine 343. A propeptide spanning residues 393-417 (LKTDTVSTSVSGNEPLDDNVDGFHA) is cleaved from the precursor. A disordered region spans residues 398–417 (VSTSVSGNEPLDDNVDGFHA). The span at 407 to 417 (PLDDNVDGFHA) shows a compositional bias: acidic residues.

This sequence belongs to the venom metalloproteinase (M12B) family. P-I subfamily. As to quaternary structure, monomer. Requires Zn(2+) as cofactor. Expressed by the venom gland.

It is found in the secreted. In terms of biological role, this protein is an alkaline zinc metalloprotease from snake venom that possesses weak hemorrhagic activity. The sequence is that of Snake venom metalloproteinase aculysin-1 from Deinagkistrodon acutus (Hundred-pace snake).